The primary structure comprises 264 residues: Proteasome subunit alpha type-4 (264 aa).

This sequence belongs to the peptidase T1A family. In terms of assembly, the 26S proteasome consists of a 20S proteasome core and two 19S regulatory subunits. The 20S proteasome core is composed of 28 subunits that are arranged in four stacked rings, resulting in a barrel-shaped structure. The two end rings are each formed by seven alpha subunits, and the two central rings are each formed by seven beta subunits. The catalytic chamber with the active sites is on the inside of the barrel. Interacts with PI31.

It is found in the cytoplasm. It localises to the nucleus. Its function is as follows. The proteasome is a multicatalytic proteinase complex which is characterized by its ability to cleave peptides with Arg, Phe, Tyr, Leu, and Glu adjacent to the leaving group at neutral or slightly basic pH. The proteasome has an ATP-dependent proteolytic activity. In Drosophila melanogaster (Fruit fly), this protein is Proteasome subunit alpha type-4 (Prosalpha3).